Here is a 450-residue protein sequence, read N- to C-terminus: ATP-dependent protease ATPase subunit HslU (450 aa).

Residues Val29, 71–76 (GVGKTE), Asp261, Glu328, and Arg400 each bind ATP.

Belongs to the ClpX chaperone family. HslU subfamily. In terms of assembly, a double ring-shaped homohexamer of HslV is capped on each side by a ring-shaped HslU homohexamer. The assembly of the HslU/HslV complex is dependent on binding of ATP.

It localises to the cytoplasm. ATPase subunit of a proteasome-like degradation complex; this subunit has chaperone activity. The binding of ATP and its subsequent hydrolysis by HslU are essential for unfolding of protein substrates subsequently hydrolyzed by HslV. HslU recognizes the N-terminal part of its protein substrates and unfolds these before they are guided to HslV for hydrolysis. This Rickettsia africae (strain ESF-5) protein is ATP-dependent protease ATPase subunit HslU.